A 577-amino-acid chain; its full sequence is 2-succinyl-5-enolpyruvyl-6-hydroxy-3-cyclohexene-1-carboxylate synthase (577 aa).

Belongs to the TPP enzyme family. MenD subfamily. Homodimer. Mg(2+) serves as cofactor. It depends on Mn(2+) as a cofactor. Requires thiamine diphosphate as cofactor.

It carries out the reaction isochorismate + 2-oxoglutarate + H(+) = 5-enolpyruvoyl-6-hydroxy-2-succinyl-cyclohex-3-ene-1-carboxylate + CO2. The protein operates within quinol/quinone metabolism; 1,4-dihydroxy-2-naphthoate biosynthesis; 1,4-dihydroxy-2-naphthoate from chorismate: step 2/7. It functions in the pathway quinol/quinone metabolism; menaquinone biosynthesis. Catalyzes the thiamine diphosphate-dependent decarboxylation of 2-oxoglutarate and the subsequent addition of the resulting succinic semialdehyde-thiamine pyrophosphate anion to isochorismate to yield 2-succinyl-5-enolpyruvyl-6-hydroxy-3-cyclohexene-1-carboxylate (SEPHCHC). This Enterococcus faecalis (strain ATCC 700802 / V583) protein is 2-succinyl-5-enolpyruvyl-6-hydroxy-3-cyclohexene-1-carboxylate synthase.